The sequence spans 188 residues: dCTP deaminase (188 aa).

Residues 111-116, 135-137, Q156, Y170, and Q180 contribute to the dCTP site; these read KSTYAR and TLE. E137 acts as the Proton donor/acceptor in catalysis.

The protein belongs to the dCTP deaminase family. Homotrimer.

It catalyses the reaction dCTP + H2O + H(+) = dUTP + NH4(+). The protein operates within pyrimidine metabolism; dUMP biosynthesis; dUMP from dCTP (dUTP route): step 1/2. In terms of biological role, catalyzes the deamination of dCTP to dUTP. In Neisseria meningitidis serogroup C / serotype 2a (strain ATCC 700532 / DSM 15464 / FAM18), this protein is dCTP deaminase.